A 526-amino-acid polypeptide reads, in one-letter code: Bifunctional purine biosynthesis protein PurH (526 aa).

The region spanning 1-145 (MIRTALLSVS…KNHQDVTVLI (145 aa)) is the MGS-like domain.

This sequence belongs to the PurH family.

It carries out the reaction (6R)-10-formyltetrahydrofolate + 5-amino-1-(5-phospho-beta-D-ribosyl)imidazole-4-carboxamide = 5-formamido-1-(5-phospho-D-ribosyl)imidazole-4-carboxamide + (6S)-5,6,7,8-tetrahydrofolate. It catalyses the reaction IMP + H2O = 5-formamido-1-(5-phospho-D-ribosyl)imidazole-4-carboxamide. It participates in purine metabolism; IMP biosynthesis via de novo pathway; 5-formamido-1-(5-phospho-D-ribosyl)imidazole-4-carboxamide from 5-amino-1-(5-phospho-D-ribosyl)imidazole-4-carboxamide (10-formyl THF route): step 1/1. The protein operates within purine metabolism; IMP biosynthesis via de novo pathway; IMP from 5-formamido-1-(5-phospho-D-ribosyl)imidazole-4-carboxamide: step 1/1. The protein is Bifunctional purine biosynthesis protein PurH of Polynucleobacter necessarius subsp. necessarius (strain STIR1).